A 159-amino-acid chain; its full sequence is Globin D, coelomic (159 aa).

An N-acetylglycine modification is found at Gly-2. The region spanning 12-158 is the Globin domain; that stretch reads DLTPAEKDLI…VQGVLITKHA (147 aa). The heme b site is built by His-74 and His-105.

This sequence belongs to the globin family. In terms of assembly, homodimer.

This chain is Globin D, coelomic, found in Molpadia arenicola (Sea cucumber).